The chain runs to 513 residues: Histidine ammonia-lyase (513 aa).

Residues 142–144 constitute a cross-link (5-imidazolinone (Ala-Gly)); that stretch reads ASG. The residue at position 143 (serine 143) is a 2,3-didehydroalanine (Ser).

This sequence belongs to the PAL/histidase family. Post-translationally, contains an active site 4-methylidene-imidazol-5-one (MIO), which is formed autocatalytically by cyclization and dehydration of residues Ala-Ser-Gly.

It is found in the cytoplasm. The catalysed reaction is L-histidine = trans-urocanate + NH4(+). It functions in the pathway amino-acid degradation; L-histidine degradation into L-glutamate; N-formimidoyl-L-glutamate from L-histidine: step 1/3. This is Histidine ammonia-lyase from Mesorhizobium japonicum (strain LMG 29417 / CECT 9101 / MAFF 303099) (Mesorhizobium loti (strain MAFF 303099)).